The primary structure comprises 324 residues: tRNA pseudouridine synthase B (324 aa).

Aspartate 49 acts as the Nucleophile in catalysis.

The protein belongs to the pseudouridine synthase TruB family. Type 1 subfamily.

It catalyses the reaction uridine(55) in tRNA = pseudouridine(55) in tRNA. In terms of biological role, responsible for synthesis of pseudouridine from uracil-55 in the psi GC loop of transfer RNAs. The sequence is that of tRNA pseudouridine synthase B from Brucella anthropi (strain ATCC 49188 / DSM 6882 / CCUG 24695 / JCM 21032 / LMG 3331 / NBRC 15819 / NCTC 12168 / Alc 37) (Ochrobactrum anthropi).